A 224-amino-acid chain; its full sequence is MKRTKNINQEMFRKEWRTHRLAPVALAVSAVFFLAGCEQTDETVSLYQNADDCSSANPSMAAQCTTAYNNALKEAEKTAPKYATKEDCVAEFGEAQCTQTPAPAQAGMAAESQQGGGMSWMPLMAGYMMGRMMGGGAGFAQQPLFSPKTPASPANGQFVDASGKNYGNATTGRTMTVPKTALAPKPATTSTITRGGFGETVAKQNSMQRSSASSSSSSSRSMGG.

A disordered region spans residues 178 to 224 (PKTALAPKPATTSTITRGGFGETVAKQNSMQRSSASSSSSSSRSMGG). Over residues 209-224 (RSSASSSSSSSRSMGG) the composition is skewed to low complexity.

It belongs to the UPF0441 family.

The sequence is that of UPF0441 protein PC1_0312 from Pectobacterium carotovorum subsp. carotovorum (strain PC1).